The chain runs to 367 residues: DNA replication and repair protein RecF (367 aa).

30-37 serves as a coordination point for ATP; sequence GANGSGKT.

The protein belongs to the RecF family.

Its subcellular location is the cytoplasm. Its function is as follows. The RecF protein is involved in DNA metabolism; it is required for DNA replication and normal SOS inducibility. RecF binds preferentially to single-stranded, linear DNA. It also seems to bind ATP. The polypeptide is DNA replication and repair protein RecF (Pseudomonas fluorescens (strain Pf0-1)).